Here is a 115-residue protein sequence, read N- to C-terminus: 5-hydroxyisourate hydrolase (115 aa).

The tract at residues 1-23 (MSGLTTHILDQASGKPAAGVGVR) is disordered. H7, R45, and Y112 together coordinate substrate.

This sequence belongs to the transthyretin family. 5-hydroxyisourate hydrolase subfamily. As to quaternary structure, homotetramer.

The enzyme catalyses 5-hydroxyisourate + H2O = 5-hydroxy-2-oxo-4-ureido-2,5-dihydro-1H-imidazole-5-carboxylate + H(+). Catalyzes the hydrolysis of 5-hydroxyisourate (HIU) to 2-oxo-4-hydroxy-4-carboxy-5-ureidoimidazoline (OHCU). The protein is 5-hydroxyisourate hydrolase of Caulobacter vibrioides (strain ATCC 19089 / CIP 103742 / CB 15) (Caulobacter crescentus).